Consider the following 550-residue polypeptide: Beta-fructofuranosidase, insoluble isoenzyme CWINV6 (550 aa).

Residues 28–31 (WLND), glutamine 47, 92–93 (WS), 157–158 (RD), and glutamate 214 each bind substrate. Residue aspartate 31 is part of the active site. N-linked (GlcNAc...) asparagine glycans are attached at residues asparagine 235 and asparagine 272.

The protein belongs to the glycosyl hydrolase 32 family. Expressed in seedlings and leaves, and, to a lower extent, in flowers and seeds.

It is found in the secreted. The protein resides in the extracellular space. The protein localises to the apoplast. It localises to the cell wall. The enzyme catalyses Hydrolysis of terminal, non-reducing (2-&gt;1)- and (2-&gt;6)-linked beta-D-fructofuranose residues in fructans.. Its function is as follows. 6 and 1-fructan exohydrolase that can degrade both inulin and levan-type fructans, such as phlein, levan, neokestose, levanbiose, 6-kestose, 1-kestose, inulin, and 1,1-nystose. In Arabidopsis thaliana (Mouse-ear cress), this protein is Beta-fructofuranosidase, insoluble isoenzyme CWINV6 (CWINV6).